Consider the following 232-residue polypeptide: Orotate phosphoribosyltransferase (232 aa).

Residues Arg-107, Lys-108, Lys-111, His-113, and 133–141 (EDLTTAGGS) contribute to the 5-phospho-alpha-D-ribose 1-diphosphate site. Orotate is bound at residue Thr-137.

It belongs to the purine/pyrimidine phosphoribosyltransferase family. PyrE subfamily. Homodimer. Mg(2+) serves as cofactor.

It catalyses the reaction orotidine 5'-phosphate + diphosphate = orotate + 5-phospho-alpha-D-ribose 1-diphosphate. It participates in pyrimidine metabolism; UMP biosynthesis via de novo pathway; UMP from orotate: step 1/2. In terms of biological role, catalyzes the transfer of a ribosyl phosphate group from 5-phosphoribose 1-diphosphate to orotate, leading to the formation of orotidine monophosphate (OMP). This Sinorhizobium medicae (strain WSM419) (Ensifer medicae) protein is Orotate phosphoribosyltransferase.